Here is a 122-residue protein sequence, read N- to C-terminus: Putative iron-sulfur cluster insertion protein ErpA (122 aa).

Residues cysteine 50, cysteine 114, and cysteine 116 each contribute to the iron-sulfur cluster site.

This sequence belongs to the HesB/IscA family. As to quaternary structure, homodimer. Requires iron-sulfur cluster as cofactor.

Its function is as follows. Required for insertion of 4Fe-4S clusters. This is Putative iron-sulfur cluster insertion protein ErpA from Burkholderia mallei (strain NCTC 10247).